We begin with the raw amino-acid sequence, 116 residues long: UPF0342 protein CTC_01059 (116 aa).

It belongs to the UPF0342 family.

The sequence is that of UPF0342 protein CTC_01059 from Clostridium tetani (strain Massachusetts / E88).